A 356-amino-acid chain; its full sequence is Methionine import ATP-binding protein MetN 1 (356 aa).

Residues 15 to 254 (IQIRALNKTY…PVQPITQELL (240 aa)) form the ABC transporter domain. Residue 51–58 (GKSGAGKS) participates in ATP binding.

The protein belongs to the ABC transporter superfamily. Methionine importer (TC 3.A.1.24) family. The complex is composed of two ATP-binding proteins (MetN), two transmembrane proteins (MetI) and a solute-binding protein (MetQ).

The protein localises to the cell inner membrane. It catalyses the reaction L-methionine(out) + ATP + H2O = L-methionine(in) + ADP + phosphate + H(+). It carries out the reaction D-methionine(out) + ATP + H2O = D-methionine(in) + ADP + phosphate + H(+). Functionally, part of the ABC transporter complex MetNIQ involved in methionine import. Responsible for energy coupling to the transport system. The polypeptide is Methionine import ATP-binding protein MetN 1 (Acinetobacter baylyi (strain ATCC 33305 / BD413 / ADP1)).